The chain runs to 142 residues: ATP synthase epsilon chain (142 aa).

The protein belongs to the ATPase epsilon chain family. F-type ATPases have 2 components, CF(1) - the catalytic core - and CF(0) - the membrane proton channel. CF(1) has five subunits: alpha(3), beta(3), gamma(1), delta(1), epsilon(1). CF(0) has three main subunits: a, b and c.

The protein localises to the cell inner membrane. In terms of biological role, produces ATP from ADP in the presence of a proton gradient across the membrane. The chain is ATP synthase epsilon chain from Shewanella pealeana (strain ATCC 700345 / ANG-SQ1).